Here is a 321-residue protein sequence, read N- to C-terminus: Probable pectate lyase A (321 aa).

The N-terminal stretch at Met-1 to Ala-18 is a signal peptide. Asn-93 carries an N-linked (GlcNAc...) asparagine glycan. 3 residues coordinate Ca(2+): Asp-134, Asp-163, and Asp-167. Residue Arg-220 is part of the active site. N-linked (GlcNAc...) asparagine glycosylation is present at Asn-238.

It belongs to the polysaccharide lyase 1 family. The cofactor is Ca(2+).

The protein localises to the secreted. The catalysed reaction is Eliminative cleavage of (1-&gt;4)-alpha-D-galacturonan to give oligosaccharides with 4-deoxy-alpha-D-galact-4-enuronosyl groups at their non-reducing ends.. In terms of biological role, pectinolytic enzyme consist of four classes of enzymes: pectin lyase, polygalacturonase, pectin methylesterase and rhamnogalacturonase. Among pectinolytic enzymes, pectin lyase is the most important in depolymerization of pectin, since it cleaves internal glycosidic bonds of highly methylated pectins. Favors pectate, the anion, over pectin, the methyl ester. The sequence is that of Probable pectate lyase A (plyA) from Aspergillus fumigatus (strain CBS 144.89 / FGSC A1163 / CEA10) (Neosartorya fumigata).